Consider the following 154-residue polypeptide: MRCPHCHKNGSRVVDSRPSEDGSFIRRRRECIHCGFRFTTFERYEETPLLVIKKDGTRQEFSRQKILNGIVRSAEKRPVSMERLTKIADKVEKQIRSIGESEVSSQIIGKFVMNELKGVDEIAYIRFASVYRQFKDVDAFMSELETMMKAEHKK.

A zinc finger lies at C3–C34. The ATP-cone domain maps to L49–A139.

It belongs to the NrdR family. Requires Zn(2+) as cofactor.

Functionally, negatively regulates transcription of bacterial ribonucleotide reductase nrd genes and operons by binding to NrdR-boxes. The polypeptide is Transcriptional repressor NrdR (Limosilactobacillus reuteri (strain DSM 20016) (Lactobacillus reuteri)).